Reading from the N-terminus, the 142-residue chain is Large ribosomal subunit protein uL13 (142 aa).

It belongs to the universal ribosomal protein uL13 family. Part of the 50S ribosomal subunit.

Functionally, this protein is one of the early assembly proteins of the 50S ribosomal subunit, although it is not seen to bind rRNA by itself. It is important during the early stages of 50S assembly. The protein is Large ribosomal subunit protein uL13 of Marinomonas sp. (strain MWYL1).